Consider the following 584-residue polypeptide: Segmentation polarity homeobox protein engrailed (584 aa).

5 disordered regions span residues 1 to 27 (MALEDRCSPQSAPSPPGCLPHSPPQQH), 141 to 198 (EESD…SKPS), 343 to 380 (IGQAQSTTPVTTPSSRPSQLASPPPASNASTISSSSST), 392 to 451 (CSSA…GGKN), and 465 to 492 (DRPSSGPRYRRPKQPKDKTNDEKRPRTA). The span at 12–23 (APSPPGCLPHSP) shows a compositional bias: pro residues. A compositionally biased stretch (acidic residues) spans 160-174 (TEEDEEEDDDIDVDD). Residues 189–198 (HQQSKQSKPS) are compositionally biased toward polar residues. 2 stretches are compositionally biased toward low complexity: residues 348–380 (STTPVTTPSSRPSQLASPPPASNASTISSSSST) and 392–405 (CSSAASSLNSSPSS). A compositionally biased stretch (basic and acidic residues) spans 478 to 489 (QPKDKTNDEKRP). A DNA-binding region (homeobox) is located at residues 486–545 (EKRPRTAFSSEQLARLKREFNENRYLTERRRQQLSSELGLNEAQIKIWFQNKRAKIKKST).

It belongs to the engrailed homeobox family.

It localises to the nucleus. Functionally, this protein specifies the body segmentation pattern. It is required for the development of the central nervous system. Transcriptional regulator that repress activated promoters. The polypeptide is Segmentation polarity homeobox protein engrailed (en) (Drosophila virilis (Fruit fly)).